We begin with the raw amino-acid sequence, 138 residues long: Putative ribonuclease VapC45 (138 aa).

In terms of biological role, toxic component of a type II toxin-antitoxin (TA) system. An RNase. The cognate antitoxin is VapB45. The chain is Putative ribonuclease VapC45 from Mycobacterium tuberculosis (strain ATCC 25618 / H37Rv).